The sequence spans 177 residues: ATP synthase subunit delta (177 aa).

It belongs to the ATPase delta chain family. In terms of assembly, F-type ATPases have 2 components, F(1) - the catalytic core - and F(0) - the membrane proton channel. F(1) has five subunits: alpha(3), beta(3), gamma(1), delta(1), epsilon(1). F(0) has three main subunits: a(1), b(2) and c(10-14). The alpha and beta chains form an alternating ring which encloses part of the gamma chain. F(1) is attached to F(0) by a central stalk formed by the gamma and epsilon chains, while a peripheral stalk is formed by the delta and b chains.

It localises to the cell inner membrane. Its function is as follows. F(1)F(0) ATP synthase produces ATP from ADP in the presence of a proton or sodium gradient. F-type ATPases consist of two structural domains, F(1) containing the extramembraneous catalytic core and F(0) containing the membrane proton channel, linked together by a central stalk and a peripheral stalk. During catalysis, ATP synthesis in the catalytic domain of F(1) is coupled via a rotary mechanism of the central stalk subunits to proton translocation. This protein is part of the stalk that links CF(0) to CF(1). It either transmits conformational changes from CF(0) to CF(1) or is implicated in proton conduction. The chain is ATP synthase subunit delta from Leptothrix cholodnii (strain ATCC 51168 / LMG 8142 / SP-6) (Leptothrix discophora (strain SP-6)).